A 250-amino-acid chain; its full sequence is Probable transcriptional regulatory protein Mkms_2298 (250 aa).

The protein belongs to the TACO1 family.

The protein resides in the cytoplasm. The sequence is that of Probable transcriptional regulatory protein Mkms_2298 from Mycobacterium sp. (strain KMS).